The following is a 205-amino-acid chain: Large ribosomal subunit protein uL18 (205 aa).

This sequence belongs to the universal ribosomal protein uL18 family. Part of the 50S ribosomal subunit. Contacts the 5S and 23S rRNAs.

Its function is as follows. This is one of the proteins that bind and probably mediate the attachment of the 5S RNA into the large ribosomal subunit, where it forms part of the central protuberance. In Pyrobaculum islandicum (strain DSM 4184 / JCM 9189 / GEO3), this protein is Large ribosomal subunit protein uL18.